Here is a 945-residue protein sequence, read N- to C-terminus: Isoleucine--tRNA ligase (945 aa).

The 'HIGH' region motif lies at 66–76 (PYANGDIHLGH). Glu581 is an L-isoleucyl-5'-AMP binding site. Positions 622–626 (KMSKS) match the 'KMSKS' region motif. An ATP-binding site is contributed by Lys625. 4 residues coordinate Zn(2+): Cys908, Cys911, Cys928, and Cys931.

This sequence belongs to the class-I aminoacyl-tRNA synthetase family. IleS type 1 subfamily. Monomer. It depends on Zn(2+) as a cofactor.

It localises to the cytoplasm. The enzyme catalyses tRNA(Ile) + L-isoleucine + ATP = L-isoleucyl-tRNA(Ile) + AMP + diphosphate. Its function is as follows. Catalyzes the attachment of isoleucine to tRNA(Ile). As IleRS can inadvertently accommodate and process structurally similar amino acids such as valine, to avoid such errors it has two additional distinct tRNA(Ile)-dependent editing activities. One activity is designated as 'pretransfer' editing and involves the hydrolysis of activated Val-AMP. The other activity is designated 'posttransfer' editing and involves deacylation of mischarged Val-tRNA(Ile). The sequence is that of Isoleucine--tRNA ligase from Burkholderia orbicola (strain MC0-3).